Consider the following 179-residue polypeptide: Adenine phosphoribosyltransferase (179 aa).

It belongs to the purine/pyrimidine phosphoribosyltransferase family. As to quaternary structure, homodimer.

Its subcellular location is the cytoplasm. It catalyses the reaction AMP + diphosphate = 5-phospho-alpha-D-ribose 1-diphosphate + adenine. Its pathway is purine metabolism; AMP biosynthesis via salvage pathway; AMP from adenine: step 1/1. Catalyzes a salvage reaction resulting in the formation of AMP, that is energically less costly than de novo synthesis. This Ruegeria pomeroyi (strain ATCC 700808 / DSM 15171 / DSS-3) (Silicibacter pomeroyi) protein is Adenine phosphoribosyltransferase.